A 405-amino-acid chain; its full sequence is Coenzyme F420 hydrogenase subunit alpha (405 aa).

4 residues coordinate Ni(2+): C63, C66, C380, and C383.

This sequence belongs to the [NiFe]/[NiFeSe] hydrogenase large subunit family. Heterocomplex of the form (alpha(1)beta(1)gamma(1))(8). The cofactor is Ni(2+). Iron-sulfur cluster is required as a cofactor. Requires FAD as cofactor.

It carries out the reaction oxidized coenzyme F420-(gamma-L-Glu)(n) + H2 + H(+) = reduced coenzyme F420-(gamma-L-Glu)(n). Reduces the physiological low-potential two-electron acceptor coenzyme F420, and the artificial one-electron acceptor methylviologen. The protein is Coenzyme F420 hydrogenase subunit alpha (frhA) of Methanothermobacter thermautotrophicus (strain ATCC 29096 / DSM 1053 / JCM 10044 / NBRC 100330 / Delta H) (Methanobacterium thermoautotrophicum).